Reading from the N-terminus, the 209-residue chain is MSVLLQHQFKPLPADKQIDTCCFLDSVSHLPAFFDCFGSAIFSPIKADITGNISKIRSVYESNPSKFKTLQMILEGEKELHGPQWPKVGATLALMWLKRGLKFIQVMLQSIADGERDDQNPNLIKVNITKAYEIALKKYHGWFVQKIFQTALIAAPYKDDFLKALSKGQTVKEEECIEKIRQFLVNYTTTIEAIYIMYNKMNAELDYKA.

2 tandem repeats follow at residues 45-55 (IKADITGNISK) and 56-66 (IRSVYESNPSK). The tract at residues 45–66 (IKADITGNISKIRSVYESNPSK) is 2 X 12 AA approximate tandem repeats. 48–55 (DITGNISK) serves as a coordination point for beta-D-galactosyl-(1-&gt;4)-beta-D-glucosyl-(1&lt;-&gt;1)-N-[(9Z)-octadecenoyl]-sphing-4-enine. Beta-D-galactosyl-(1-&gt;4)-beta-D-glucosyl-(1&lt;-&gt;1)-N-[(9Z)-octadecenoyl]-sphing-4-enine-binding residues include H140 and Y207.

Belongs to the GLTP family.

It localises to the cytoplasm. In terms of biological role, accelerates the intermembrane transfer of various glycolipids. Catalyzes the transfer of various glycosphingolipids between membranes but does not catalyze the transfer of phospholipids. May be involved in the intracellular translocation of glucosylceramides. This is Glycolipid transfer protein (gltp) from Xenopus tropicalis (Western clawed frog).